A 169-amino-acid chain; its full sequence is Putative prolyl-tRNA synthetase associated domain-containing protein 1 (169 aa).

It belongs to the PRORSD1 family.

The polypeptide is Putative prolyl-tRNA synthetase associated domain-containing protein 1 (PRORSD1P) (Homo sapiens (Human)).